Consider the following 214-residue polypeptide: RNA pyrophosphohydrolase (214 aa).

Residues 6–149 form the Nudix hydrolase domain; it reads GFRPNVGIIL…KRDVYQLALT (144 aa). A Nudix box motif is present at residues 38-59; sequence GGIKYGETPMQAMYRELHEETG.

The protein belongs to the Nudix hydrolase family. RppH subfamily. A divalent metal cation is required as a cofactor.

Accelerates the degradation of transcripts by removing pyrophosphate from the 5'-end of triphosphorylated RNA, leading to a more labile monophosphorylated state that can stimulate subsequent ribonuclease cleavage. In Burkholderia cenocepacia (strain ATCC BAA-245 / DSM 16553 / LMG 16656 / NCTC 13227 / J2315 / CF5610) (Burkholderia cepacia (strain J2315)), this protein is RNA pyrophosphohydrolase.